The chain runs to 229 residues: Chloride conductance regulatory protein ICln (229 aa).

The protein belongs to the pICln (TC 1.A.47) family. Homooligomer.

The protein localises to the cytoplasm. It localises to the nucleus. Functionally, may participate in cellular volume control by activation of a swelling-induced chloride conductance pathway. The sequence is that of Chloride conductance regulatory protein ICln from Arabidopsis thaliana (Mouse-ear cress).